Reading from the N-terminus, the 554-residue chain is MDKRHDPSRRIIAPTGTKLSCKSWLTEAPMRMLMNNLHPDVAERPEDLVVYGGIGRAARDWECYDKIVEVLQRLEDDETLMVQSGKPVGVFKTHSNAPRVIIANSNLVPHWANWEHFNELDKKGLAMYGQMTAGSWIYIGSQGIVQGTYETFVAMAKQHFNGVSAGKWILTGGLGGMGGAQPLAGTMAGYSVLTCEVDETRIDFRLRTKYVDKKATSLDEALAMIEEANNSGKPVSVGLLANAADVFAELVERGITPDVVTDQTSAHDPLNGYLPQGWTLEYAAEMRKKDEAAVVKAAKQSMAVQVKAMLALQAAGAATTDYGNNIRQMAFEEGVENAFDFPGFVPAYVRPLFCEGIGPFRWVALSGDPEDIYKTDAKVKELIPDNPQLHNWLDMARERIAFQGLPSRICWVGLKDRARLALAFNEMVKNGELSAPIVIGRDHLDSGSVASPNRETESMLDGSDAVSDWPLMNALLNTASGATWVSLHHGGGVGMGFSQHSGVVIVADGTDDAAVRLGRVLWNDPATGVMRHADAGYDIAKNCAKEQGLDLPML.

NAD(+) contacts are provided by residues 52–53 (GG), Gln-130, 176–178 (GMG), Glu-196, Arg-201, 242–243 (NA), 263–267 (QTSAH), 273–274 (YL), and Tyr-322. Residue Cys-410 is part of the active site. Position 492 (Gly-492) interacts with NAD(+).

The protein belongs to the urocanase family. It depends on NAD(+) as a cofactor.

Its subcellular location is the cytoplasm. The catalysed reaction is 4-imidazolone-5-propanoate = trans-urocanate + H2O. It functions in the pathway amino-acid degradation; L-histidine degradation into L-glutamate; N-formimidoyl-L-glutamate from L-histidine: step 2/3. In terms of biological role, catalyzes the conversion of urocanate to 4-imidazolone-5-propionate. The sequence is that of Urocanate hydratase from Shewanella halifaxensis (strain HAW-EB4).